A 239-amino-acid polypeptide reads, in one-letter code: MRKNGRGPLDLRPILLEPRVSKHAEGSCLVRFGDTHVLCTASVDEKVPPHVYGTGAGWVTAEYGMLPRSTHERMQREAARGKQTGRTLEIQRLVGRALRAAVDLRAIGPRTVTLDCDVIQADGGTRTAAITGAYVALVQAVRSIQKRKQLAHDPVKRSVAAVSVGIVAGEVHLDLDYDEDSTAEVDMNVVATGEGALVEVQGTAEGKPFARAELDRMLDAALAGLSRLKELQEAALRTP.

Phosphate contacts are provided by residues arginine 86 and 124–126 (GTR).

It belongs to the RNase PH family. Homohexameric ring arranged as a trimer of dimers.

It catalyses the reaction tRNA(n+1) + phosphate = tRNA(n) + a ribonucleoside 5'-diphosphate. Phosphorolytic 3'-5' exoribonuclease that plays an important role in tRNA 3'-end maturation. Removes nucleotide residues following the 3'-CCA terminus of tRNAs; can also add nucleotides to the ends of RNA molecules by using nucleoside diphosphates as substrates, but this may not be physiologically important. Probably plays a role in initiation of 16S rRNA degradation (leading to ribosome degradation) during starvation. This is Ribonuclease PH from Anaeromyxobacter dehalogenans (strain 2CP-C).